A 411-amino-acid chain; its full sequence is Thyroxine-binding globulin (411 aa).

The first 15 residues, 1–15 (MPLFSLVLLILGLHC), serve as a signal peptide directing secretion. Asn34, Asn97, Asn163, and Asn251 each carry an N-linked (GlcNAc...) asparagine glycan. Thyroxine is bound by residues Asn291 and Lys394.

It belongs to the serpin family. Expressed by the liver and secreted in plasma.

The protein localises to the secreted. In terms of biological role, major thyroid hormone transport protein in serum. The polypeptide is Thyroxine-binding globulin (SERPINA7) (Bos taurus (Bovine)).